Here is a 385-residue protein sequence, read N- to C-terminus: Protein-glutamate methylesterase/protein-glutamine glutaminase (385 aa).

Positions 20–138 constitute a Response regulatory domain; it reads RVMIVDDSVV…EASAADIFKH (119 aa). A 4-aspartylphosphate modification is found at D71. A CheB-type methylesterase domain is found at 189–383; it reads GVTAPRVLLI…PKLVRLFSGD (195 aa). Active-site residues include S201, H229, and D325.

It belongs to the CheB family. Post-translationally, phosphorylated by CheA. Phosphorylation of the N-terminal regulatory domain activates the methylesterase activity.

The protein resides in the cytoplasm. The enzyme catalyses [protein]-L-glutamate 5-O-methyl ester + H2O = L-glutamyl-[protein] + methanol + H(+). The catalysed reaction is L-glutaminyl-[protein] + H2O = L-glutamyl-[protein] + NH4(+). In terms of biological role, involved in chemotaxis. Part of a chemotaxis signal transduction system that modulates chemotaxis in response to various stimuli. Catalyzes the demethylation of specific methylglutamate residues introduced into the chemoreceptors (methyl-accepting chemotaxis proteins or MCP) by CheR. Also mediates the irreversible deamidation of specific glutamine residues to glutamic acid. The chain is Protein-glutamate methylesterase/protein-glutamine glutaminase from Rhodopseudomonas palustris (strain BisB5).